A 245-amino-acid polypeptide reads, in one-letter code: 5'-nucleotidase SurE (245 aa).

Asp-8, Asp-9, Ser-39, and Asn-91 together coordinate a divalent metal cation.

This sequence belongs to the SurE nucleotidase family. It depends on a divalent metal cation as a cofactor.

It is found in the cytoplasm. It catalyses the reaction a ribonucleoside 5'-phosphate + H2O = a ribonucleoside + phosphate. Nucleotidase that shows phosphatase activity on nucleoside 5'-monophosphates. The polypeptide is 5'-nucleotidase SurE (Psychromonas ingrahamii (strain DSM 17664 / CCUG 51855 / 37)).